We begin with the raw amino-acid sequence, 282 residues long: tRNA N(3)-cytidine methyltransferase METTL6 (282 aa).

S-adenosyl-L-methionine-binding residues include Trp-45, Tyr-49, Gly-87, Asp-110, Asp-136, Leu-137, and Ile-157.

It belongs to the methyltransferase superfamily. METL family. As to quaternary structure, monomer. Interacts with SARS1/SerRS; interaction is mediated via tRNA(Ser) and is required for N(3)-methylcytidine methylation.

It localises to the cytoplasm. The protein localises to the nucleus. It carries out the reaction cytidine(32) in tRNA(Ser) + S-adenosyl-L-methionine = N(3)-methylcytidine(32) in tRNA(Ser) + S-adenosyl-L-homocysteine + H(+). Its function is as follows. S-adenosyl-L-methionine-dependent methyltransferase that mediates N(3)-methylcytidine modification of residue 32 of the tRNA anticodon loop of tRNA(Ser), including tRNA(Ser)(UGA) and tRNA(Ser)(GCU). Interaction with SARS1/SerRS is required for N(3)-methylcytidine methylation. The chain is tRNA N(3)-cytidine methyltransferase METTL6 (METTL6) from Pongo abelii (Sumatran orangutan).